We begin with the raw amino-acid sequence, 68 residues long: Conotoxin Mi11.1 (68 aa).

The first 26 residues, 1–26 (MMLRLTSVSCFLLVIACLNLFQVVLT), serve as a signal peptide directing secretion. Disulfide bonds link C29–C43, C36–C48, C42–C52, and C47–C56. Y60 is modified (tyrosine amide). The propeptide occupies 64–68 (ATFQE).

It belongs to the conotoxin I2 superfamily. In terms of tissue distribution, expressed by the venom duct.

It is found in the secreted. This Conus miles (Soldier cone) protein is Conotoxin Mi11.1.